The sequence spans 403 residues: S-adenosylmethionine synthase (403 aa).

Position 17 (histidine 17) interacts with ATP. Mg(2+) is bound at residue aspartate 19. Glutamate 45 serves as a coordination point for K(+). Residues glutamate 58 and glutamine 104 each coordinate L-methionine. Residues 104 to 114 form a flexible loop region; sequence QSPDIAQGVDT. ATP-binding positions include 179–181, 250–251, aspartate 259, 265–266, alanine 282, and lysine 286; these read DGK, KF, and RK. Aspartate 259 lines the L-methionine pocket. Lysine 290 is an L-methionine binding site.

Belongs to the AdoMet synthase family. Homotetramer; dimer of dimers. Mg(2+) serves as cofactor. The cofactor is K(+).

The protein localises to the cytoplasm. It carries out the reaction L-methionine + ATP + H2O = S-adenosyl-L-methionine + phosphate + diphosphate. Its pathway is amino-acid biosynthesis; S-adenosyl-L-methionine biosynthesis; S-adenosyl-L-methionine from L-methionine: step 1/1. In terms of biological role, catalyzes the formation of S-adenosylmethionine (AdoMet) from methionine and ATP. The overall synthetic reaction is composed of two sequential steps, AdoMet formation and the subsequent tripolyphosphate hydrolysis which occurs prior to release of AdoMet from the enzyme. The polypeptide is S-adenosylmethionine synthase (Mycolicibacterium paratuberculosis (strain ATCC BAA-968 / K-10) (Mycobacterium paratuberculosis)).